The sequence spans 593 residues: Alanine--tRNA ligase (593 aa).

Residues histidine 456, histidine 460, cysteine 558, and histidine 562 each contribute to the Zn(2+) site.

The protein belongs to the class-II aminoacyl-tRNA synthetase family. Zn(2+) is required as a cofactor.

The protein localises to the cytoplasm. The enzyme catalyses tRNA(Ala) + L-alanine + ATP = L-alanyl-tRNA(Ala) + AMP + diphosphate. In terms of biological role, catalyzes the attachment of alanine to tRNA(Ala) in a two-step reaction: alanine is first activated by ATP to form Ala-AMP and then transferred to the acceptor end of tRNA(Ala). Also edits incorrectly charged Ser-tRNA(Ala) and Gly-tRNA(Ala) via its editing domain. The polypeptide is Alanine--tRNA ligase (alaS) (Borrelia hermsii (strain HS1 / DAH)).